The chain runs to 533 residues: Purine-cytosine permease FCY2 (533 aa).

The Cytoplasmic portion of the chain corresponds to 1–98; it reads MLEEGNNVYE…NAASMWFSAN (98 aa). Residue Lys-16 forms a Glycyl lysine isopeptide (Lys-Gly) (interchain with G-Cter in ubiquitin) linkage. A Phosphoserine modification is found at Ser-18. The chain crosses the membrane as a helical span at residues 99–119; it reads MVIASYALGALGPMVFGLNFG. The Extracellular segment spans residues 120-121; the sequence is QS. A helical transmembrane segment spans residues 122–141; it reads VLVIIFFNIMGLIFVAFFSV. Over 142-198 the chain is Cytoplasmic; that stretch reads FGAELGLRQMILSRYLVGNVTARIFSLINVIACVGWGIVNTSVSAQLLNMVNEGSGH. The segment at 165-184 is surface seeking; the sequence is IFSLINVIACVGWGIVNTSV. The chain crosses the membrane as a helical span at residues 199 to 218; that stretch reads VCPIWAGCLIIIGGTVLVTF. The Extracellular portion of the chain corresponds to 219–256; it reads FGYSVIHAYEKWSWVPNFAVFLVIIAQLSRSGKFKGGE. The helical transmembrane segment at 257–276 threads the bilayer; that stretch reads WVGGATTAGSVLSFGSSIFG. Residues 277–300 lie on the Cytoplasmic side of the membrane; the sequence is FAAGWTTYAADYTVYMPKSTNKYK. A helical membrane pass occupies residues 301–320; that stretch reads IFFSLVAGLAFPLFFTMILG. Over 321–347 the chain is Extracellular; that stretch reads AASAMAALNDPTWKAYYDKNAMGGVIY. A helical membrane pass occupies residues 348-367; the sequence is AILVPNSLNGFGQFCCVLLA. At 368-398 the chain is on the cytoplasmic side; sequence LSTIANNIPNMYTVALSAQALWAPLAKIPRV. Residues 399–418 form a helical membrane-spanning segment; the sequence is VWTMAGNAATLGISIPATYY. The Extracellular segment spans residues 419 to 465; sequence FDGFMENFMDSIGYYLAIYIAISCSEHFFYRRSFSAYNIDDWDNWEH. Residues 466–485 traverse the membrane as a helical segment; it reads LPIGIAGTAALIVGAFGVAL. At 486-533 the chain is on the cytoplasmic side; the sequence is GMCQTYWVGEIGRLIGKYGGDIGFELGASWAFIIYNILRPLELKYFGR.

This sequence belongs to the purine-cytosine permease (2.A.39) family. Not N-glycosylated.

It is found in the membrane. Functionally, this permease has a broad specificity towards purines, and also transport cytosine and 5-methylcytosine but neither uracil nor thymine. The sequence is that of Purine-cytosine permease FCY2 (FCY2) from Saccharomyces cerevisiae (strain ATCC 204508 / S288c) (Baker's yeast).